Here is a 166-residue protein sequence, read N- to C-terminus: Endoribonuclease YbeY (166 aa).

Zn(2+)-binding residues include His129, His133, and His139.

The protein belongs to the endoribonuclease YbeY family. Zn(2+) serves as cofactor.

The protein resides in the cytoplasm. Single strand-specific metallo-endoribonuclease involved in late-stage 70S ribosome quality control and in maturation of the 3' terminus of the 16S rRNA. This chain is Endoribonuclease YbeY, found in Heliobacterium modesticaldum (strain ATCC 51547 / Ice1).